We begin with the raw amino-acid sequence, 235 residues long: 2-C-methyl-D-erythritol 4-phosphate cytidylyltransferase (235 aa).

This sequence belongs to the IspD/TarI cytidylyltransferase family. IspD subfamily.

The catalysed reaction is 2-C-methyl-D-erythritol 4-phosphate + CTP + H(+) = 4-CDP-2-C-methyl-D-erythritol + diphosphate. The protein operates within isoprenoid biosynthesis; isopentenyl diphosphate biosynthesis via DXP pathway; isopentenyl diphosphate from 1-deoxy-D-xylulose 5-phosphate: step 2/6. Functionally, catalyzes the formation of 4-diphosphocytidyl-2-C-methyl-D-erythritol from CTP and 2-C-methyl-D-erythritol 4-phosphate (MEP). This is 2-C-methyl-D-erythritol 4-phosphate cytidylyltransferase from Pseudomonas fluorescens (strain ATCC BAA-477 / NRRL B-23932 / Pf-5).